Here is a 335-residue protein sequence, read N- to C-terminus: Endo-1,4-beta-xylanase S20 (335 aa).

An N-terminal signal peptide occupies residues 1-22 (MLRKLVTGALAAALLLSGQSNA). The 203-residue stretch at 39–241 (NNKNETGNGN…GSGYVDFTYA (203 aa)) folds into the GH11 domain. Residues N42 and N78 are each glycosylated (N-linked (GlcNAc...) asparagine). E134 functions as the Nucleophile in the catalytic mechanism. An N-linked (GlcNAc...) asparagine glycan is attached at N202. E228 serves as the catalytic Proton donor. An N-linked (GlcNAc...) asparagine glycan is attached at N251. The tract at residues 251–291 (NASAPSNNNNNNNNNNDNNGNWNNWNNNNNNNNNNNNNNNN) is disordered. The segment covering 257–291 (NNNNNNNNNNDNNGNWNNWNNNNNNNNNNNNNNNN) has biased composition (low complexity). The CBM1 domain occupies 300–335 (NCAAIWGQCGGSGYNGPKCCKQGSCKQINQWYSQCQ).

Belongs to the glycosyl hydrolase 11 (cellulase G) family.

The protein resides in the secreted. It catalyses the reaction Endohydrolysis of (1-&gt;4)-beta-D-xylosidic linkages in xylans.. The protein operates within glycan degradation; xylan degradation. Functionally, endo-1,4-beta-xylanase involved in the hydrolysis of xylan, a major structural heterogeneous polysaccharide found in plant biomass representing the second most abundant polysaccharide in the biosphere, after cellulose. This chain is Endo-1,4-beta-xylanase S20 (xynS20), found in Neocallimastix patriciarum (Rumen fungus).